Reading from the N-terminus, the 89-residue chain is Small ribosomal subunit protein uS15 (89 aa).

This sequence belongs to the universal ribosomal protein uS15 family. Part of the 30S ribosomal subunit. Forms a bridge to the 50S subunit in the 70S ribosome, contacting the 23S rRNA.

Functionally, one of the primary rRNA binding proteins, it binds directly to 16S rRNA where it helps nucleate assembly of the platform of the 30S subunit by binding and bridging several RNA helices of the 16S rRNA. In terms of biological role, forms an intersubunit bridge (bridge B4) with the 23S rRNA of the 50S subunit in the ribosome. In Streptococcus suis (strain 98HAH33), this protein is Small ribosomal subunit protein uS15.